The following is a 256-amino-acid chain: 3-dehydroquinate dehydratase (256 aa).

3-dehydroquinate contacts are provided by residues 46-48 (EWR) and R82. The active-site Proton donor/acceptor is H144. K171 functions as the Schiff-base intermediate with substrate in the catalytic mechanism. 3-dehydroquinate is bound by residues R213, S232, and Q236.

This sequence belongs to the type-I 3-dehydroquinase family. In terms of assembly, homodimer.

The enzyme catalyses 3-dehydroquinate = 3-dehydroshikimate + H2O. It functions in the pathway metabolic intermediate biosynthesis; chorismate biosynthesis; chorismate from D-erythrose 4-phosphate and phosphoenolpyruvate: step 3/7. Functionally, involved in the third step of the chorismate pathway, which leads to the biosynthesis of aromatic amino acids. Catalyzes the cis-dehydration of 3-dehydroquinate (DHQ) and introduces the first double bond of the aromatic ring to yield 3-dehydroshikimate. The sequence is that of 3-dehydroquinate dehydratase from Shouchella clausii (strain KSM-K16) (Alkalihalobacillus clausii).